We begin with the raw amino-acid sequence, 294 residues long: Cytidine deaminase (294 aa).

2 consecutive CMP/dCMP-type deaminase domains span residues 48-168 and 186-294; these read DEDA…FGPK and LTGD…VLLG. 89 to 91 provides a ligand contact to substrate; the sequence is NME. His-102 contacts Zn(2+). The active-site Proton donor is Glu-104. Residues Cys-129 and Cys-132 each coordinate Zn(2+).

It belongs to the cytidine and deoxycytidylate deaminase family. As to quaternary structure, homodimer. It depends on Zn(2+) as a cofactor.

The catalysed reaction is cytidine + H2O + H(+) = uridine + NH4(+). It catalyses the reaction 2'-deoxycytidine + H2O + H(+) = 2'-deoxyuridine + NH4(+). Functionally, this enzyme scavenges exogenous and endogenous cytidine and 2'-deoxycytidine for UMP synthesis. This is Cytidine deaminase from Salmonella arizonae (strain ATCC BAA-731 / CDC346-86 / RSK2980).